Here is a 445-residue protein sequence, read N- to C-terminus: tRNA modification GTPase MnmE (445 aa).

Positions 20, 79, and 119 each coordinate (6S)-5-formyl-5,6,7,8-tetrahydrofolate. Residues 215–371 (GLKLAIVGPP…ILKNIENIAE (157 aa)) form the TrmE-type G domain. N225 is a K(+) binding site. Residues 225-230 (NTGKSS), 244-250 (SNIAGTT), and 269-272 (DTAG) each bind GTP. S229 provides a ligand contact to Mg(2+). The K(+) site is built by S244, I246, and T249. T250 serves as a coordination point for Mg(2+). K445 lines the (6S)-5-formyl-5,6,7,8-tetrahydrofolate pocket.

It belongs to the TRAFAC class TrmE-Era-EngA-EngB-Septin-like GTPase superfamily. TrmE GTPase family. In terms of assembly, homodimer. Heterotetramer of two MnmE and two MnmG subunits. It depends on K(+) as a cofactor.

It is found in the cytoplasm. Functionally, exhibits a very high intrinsic GTPase hydrolysis rate. Involved in the addition of a carboxymethylaminomethyl (cmnm) group at the wobble position (U34) of certain tRNAs, forming tRNA-cmnm(5)s(2)U34. This Rickettsia akari (strain Hartford) protein is tRNA modification GTPase MnmE.